The following is a 256-amino-acid chain: Glucosamine-6-phosphate deaminase (256 aa).

The active-site Proton acceptor; for enolization step is D68. The For ring-opening step role is filled by N137. The active-site Proton acceptor; for ring-opening step is H139. E144 serves as the catalytic For ring-opening step.

It belongs to the glucosamine/galactosamine-6-phosphate isomerase family. NagB subfamily.

The catalysed reaction is alpha-D-glucosamine 6-phosphate + H2O = beta-D-fructose 6-phosphate + NH4(+). It functions in the pathway amino-sugar metabolism; N-acetylneuraminate degradation; D-fructose 6-phosphate from N-acetylneuraminate: step 5/5. Catalyzes the reversible isomerization-deamination of glucosamine 6-phosphate (GlcN6P) to form fructose 6-phosphate (Fru6P) and ammonium ion. The sequence is that of Glucosamine-6-phosphate deaminase from Mycoplasmopsis pulmonis (strain UAB CTIP) (Mycoplasma pulmonis).